The primary structure comprises 392 residues: Chaperone protein DnaJ (392 aa).

One can recognise a J domain in the interval 2–67 (DYYSILGISK…QKRDSYDRFG (66 aa)). The CR-type zinc-finger motif lies at 148–226 (GVEKELVVSG…CRGQGRVKDK (79 aa)). Zn(2+) is bound by residues cysteine 161, cysteine 164, cysteine 178, cysteine 181, cysteine 200, cysteine 203, cysteine 214, and cysteine 217. CXXCXGXG motif repeat units lie at residues 161–168 (CETCSGQG), 178–185 (CERCKGSG), 200–207 (CPECGGEG), and 214–221 (CSSCRGQG).

This sequence belongs to the DnaJ family. As to quaternary structure, homodimer. Zn(2+) is required as a cofactor.

It is found in the cytoplasm. Its function is as follows. Participates actively in the response to hyperosmotic and heat shock by preventing the aggregation of stress-denatured proteins and by disaggregating proteins, also in an autonomous, DnaK-independent fashion. Unfolded proteins bind initially to DnaJ; upon interaction with the DnaJ-bound protein, DnaK hydrolyzes its bound ATP, resulting in the formation of a stable complex. GrpE releases ADP from DnaK; ATP binding to DnaK triggers the release of the substrate protein, thus completing the reaction cycle. Several rounds of ATP-dependent interactions between DnaJ, DnaK and GrpE are required for fully efficient folding. Also involved, together with DnaK and GrpE, in the DNA replication of plasmids through activation of initiation proteins. The polypeptide is Chaperone protein DnaJ (Chlamydia pneumoniae (Chlamydophila pneumoniae)).